The following is a 371-amino-acid chain: Queuine tRNA-ribosyltransferase (371 aa).

D89 serves as the catalytic Proton acceptor. Substrate contacts are provided by residues 89–93, D143, Q185, and G212; that span reads DSGGF. The tract at residues 243-249 is RNA binding; the sequence is GVGKPED. D262 (nucleophile) is an active-site residue. The tract at residues 267 to 271 is RNA binding; important for wobble base 34 recognition; that stretch reads TRNAR. Positions 300, 302, 305, and 331 each coordinate Zn(2+).

Belongs to the queuine tRNA-ribosyltransferase family. As to quaternary structure, homodimer. Within each dimer, one monomer is responsible for RNA recognition and catalysis, while the other monomer binds to the replacement base PreQ1. Requires Zn(2+) as cofactor.

It catalyses the reaction 7-aminomethyl-7-carbaguanine + guanosine(34) in tRNA = 7-aminomethyl-7-carbaguanosine(34) in tRNA + guanine. Its pathway is tRNA modification; tRNA-queuosine biosynthesis. Its function is as follows. Catalyzes the base-exchange of a guanine (G) residue with the queuine precursor 7-aminomethyl-7-deazaguanine (PreQ1) at position 34 (anticodon wobble position) in tRNAs with GU(N) anticodons (tRNA-Asp, -Asn, -His and -Tyr). Catalysis occurs through a double-displacement mechanism. The nucleophile active site attacks the C1' of nucleotide 34 to detach the guanine base from the RNA, forming a covalent enzyme-RNA intermediate. The proton acceptor active site deprotonates the incoming PreQ1, allowing a nucleophilic attack on the C1' of the ribose to form the product. After dissociation, two additional enzymatic reactions on the tRNA convert PreQ1 to queuine (Q), resulting in the hypermodified nucleoside queuosine (7-(((4,5-cis-dihydroxy-2-cyclopenten-1-yl)amino)methyl)-7-deazaguanosine). This chain is Queuine tRNA-ribosyltransferase, found in Pseudomonas putida (strain ATCC 47054 / DSM 6125 / CFBP 8728 / NCIMB 11950 / KT2440).